Here is a 204-residue protein sequence, read N- to C-terminus: MLSLQFITHQTENYSYLESARMALEGGCKWIQLRMKEASPEEVEAVALQLKPLCKAKEAILILDDHVELAKKLEVDGVHLGKKDMPIGEARQMLGEAFIIGGTANTFEDVKLHHAAGADYLGIGPFRFTTTKINLSPVLGLEGYTSILAQMNEADIRIPVVAIGGIVAEDIPAIMETGVNGIALSGAILQAPDPVEETKRILNI.

Residues 32–36 (QLRMK) and Asp64 each bind 4-amino-2-methyl-5-(diphosphooxymethyl)pyrimidine. Residues Asp65 and Asp84 each coordinate Mg(2+). Position 103 (Thr103) interacts with 4-amino-2-methyl-5-(diphosphooxymethyl)pyrimidine. 129–131 (TTT) serves as a coordination point for 2-[(2R,5Z)-2-carboxy-4-methylthiazol-5(2H)-ylidene]ethyl phosphate. Lys132 lines the 4-amino-2-methyl-5-(diphosphooxymethyl)pyrimidine pocket. 2-[(2R,5Z)-2-carboxy-4-methylthiazol-5(2H)-ylidene]ethyl phosphate is bound at residue Gly165.

This sequence belongs to the thiamine-phosphate synthase family. The cofactor is Mg(2+).

The catalysed reaction is 2-[(2R,5Z)-2-carboxy-4-methylthiazol-5(2H)-ylidene]ethyl phosphate + 4-amino-2-methyl-5-(diphosphooxymethyl)pyrimidine + 2 H(+) = thiamine phosphate + CO2 + diphosphate. The enzyme catalyses 2-(2-carboxy-4-methylthiazol-5-yl)ethyl phosphate + 4-amino-2-methyl-5-(diphosphooxymethyl)pyrimidine + 2 H(+) = thiamine phosphate + CO2 + diphosphate. It catalyses the reaction 4-methyl-5-(2-phosphooxyethyl)-thiazole + 4-amino-2-methyl-5-(diphosphooxymethyl)pyrimidine + H(+) = thiamine phosphate + diphosphate. Its pathway is cofactor biosynthesis; thiamine diphosphate biosynthesis; thiamine phosphate from 4-amino-2-methyl-5-diphosphomethylpyrimidine and 4-methyl-5-(2-phosphoethyl)-thiazole: step 1/1. Functionally, condenses 4-methyl-5-(beta-hydroxyethyl)thiazole monophosphate (THZ-P) and 2-methyl-4-amino-5-hydroxymethyl pyrimidine pyrophosphate (HMP-PP) to form thiamine monophosphate (TMP). This Bacteroides fragilis (strain YCH46) protein is Thiamine-phosphate synthase.